Consider the following 472-residue polypeptide: Eukaryotic translation initiation factor 2 subunit 3 (472 aa).

Positions 39 to 247 (QATINIGTIG…YIVNKIPVPV (209 aa)) constitute a tr-type G domain. Residues 48 to 55 (GHVAHGKS) form a G1 region. GTP is bound at residue 51–56 (AHGKST). Residues 76–80 (NITIK) are G2. The G3 stretch occupies residues 134 to 137 (DCPG). GTP is bound by residues 190–193 (NKID) and 225–227 (SAQ). Residues 190-193 (NKID) form a G4 region. The tract at residues 225–227 (SAQ) is G5. The tract at residues 457–469 (GQIRRGVTITPTV) is interacts with cdc123.

This sequence belongs to the TRAFAC class translation factor GTPase superfamily. Classic translation factor GTPase family. EIF2G subfamily. In terms of assembly, eukaryotic translation initiation factor 2 eIF2 is a heterotrimeric complex composed of an alpha (EIF2S1), a beta (EIF2S2) and a gamma (EIF2S3) chain. eIF2 is member of the 43S pre-initiation complex (43S PIC).

It is found in the cytoplasm. The protein localises to the cytosol. It catalyses the reaction GTP + H2O = GDP + phosphate + H(+). In terms of biological role, member of the eIF2 complex that functions in the early steps of protein synthesis by forming a ternary complex with GTP and initiator tRNA. This complex binds to a 40S ribosomal subunit, followed by mRNA binding to form the 43S pre-initiation complex (43S PIC). Junction of the 60S ribosomal subunit to form the 80S initiation complex is preceded by hydrolysis of the GTP bound to eIF2 and release of an eIF2-GDP binary complex. In order for eIF2 to recycle and catalyze another round of initiation, the GDP bound to eIF2 must exchange with GTP by way of a reaction catalyzed by eIF-2B. The protein is Eukaryotic translation initiation factor 2 subunit 3 of Danio rerio (Zebrafish).